Reading from the N-terminus, the 102-residue chain is Small ribosomal subunit protein uS10 (102 aa).

This sequence belongs to the universal ribosomal protein uS10 family. As to quaternary structure, part of the 30S ribosomal subunit.

Functionally, involved in the binding of tRNA to the ribosomes. The sequence is that of Small ribosomal subunit protein uS10 from Desulfitobacterium hafniense (strain DSM 10664 / DCB-2).